Here is a 362-residue protein sequence, read N- to C-terminus: Methylthioribose-1-phosphate isomerase (362 aa).

Residues 53–55 (RGA), arginine 90, and glutamine 201 each bind substrate. Residue aspartate 241 is the Proton donor of the active site. 251-252 (NK) serves as a coordination point for substrate.

The protein belongs to the eIF-2B alpha/beta/delta subunits family. MtnA subfamily.

It carries out the reaction 5-(methylsulfanyl)-alpha-D-ribose 1-phosphate = 5-(methylsulfanyl)-D-ribulose 1-phosphate. The protein operates within amino-acid biosynthesis; L-methionine biosynthesis via salvage pathway; L-methionine from S-methyl-5-thio-alpha-D-ribose 1-phosphate: step 1/6. In terms of biological role, catalyzes the interconversion of methylthioribose-1-phosphate (MTR-1-P) into methylthioribulose-1-phosphate (MTRu-1-P). The polypeptide is Methylthioribose-1-phosphate isomerase (Dechloromonas aromatica (strain RCB)).